A 91-amino-acid chain; its full sequence is Phosphocarrier protein NPr (91 aa).

The region spanning 3 to 90 (KLERQVTICN…ALVDAKFDEA (88 aa)) is the HPr domain. Catalysis depends on H17, which acts as the Pros-phosphohistidine intermediate.

Belongs to the HPr family.

Its subcellular location is the cytoplasm. Its function is as follows. Component of the phosphoenolpyruvate-dependent nitrogen-metabolic phosphotransferase system (nitrogen-metabolic PTS), that seems to be involved in regulating nitrogen metabolism. The phosphoryl group from phosphoenolpyruvate (PEP) is transferred to the phosphoryl carrier protein NPr by enzyme I-Ntr. Phospho-NPr then transfers it to EIIA-Ntr. Could function in the transcriptional regulation of sigma-54 dependent operons in conjunction with the NPr (PtsO) and EIIA-Ntr (PtsN) proteins. This is Phosphocarrier protein NPr (ptsO) from Shewanella violacea (strain JCM 10179 / CIP 106290 / LMG 19151 / DSS12).